The sequence spans 136 residues: Histone H3.3C (136 aa).

Residues 1–42 form a disordered region; that stretch reads MARTKQTARKSTGGKAPRKQLVTKAAKKCAPATGGVKKPHRY. Arg-3 is subject to Asymmetric dimethylarginine; by PRMT6. Phosphothreonine; by HASPIN is present on Thr-4. Lys-5 is modified (allysine; alternate). Position 5 is an N6,N6,N6-trimethyllysine; alternate (Lys-5). Lys-5 is subject to N6,N6-dimethyllysine; alternate. Position 5 is an N6-(2-hydroxyisobutyryl)lysine; alternate (Lys-5). Lys-5 carries the N6-acetyllysine; alternate modification. Lys-5 bears the N6-methyllysine; alternate mark. 5-glutamyl dopamine; alternate is present on Gln-6. The residue at position 6 (Gln-6) is a 5-glutamyl serotonin; alternate. The residue at position 7 (Thr-7) is a Phosphothreonine; by PKC. Position 10 is an N6-(2-hydroxyisobutyryl)lysine; alternate (Lys-10). Lys-10 is subject to N6-lactoyllysine; alternate. Lys-10 bears the N6-methylated lysine mark. Ser-11 carries the ADP-ribosylserine; alternate modification. At Ser-11 the chain carries Phosphoserine; alternate; by AURKB, AURKC, RPS6KA3, RPS6KA4 and RPS6KA5. Thr-12 is modified (phosphothreonine; by PKC). An N6-(2-hydroxyisobutyryl)lysine; alternate modification is found at Lys-15. Lys-15 carries the N6-lactoyllysine; alternate modification. Lys-15 carries the post-translational modification N6-acetyllysine. Lys-15 is subject to N6-glutaryllysine; alternate. Arg-18 carries the post-translational modification Asymmetric dimethylarginine. N6-(2-hydroxyisobutyryl)lysine; alternate occurs at positions 19, 24, 28, and 37. Lys-19 carries the post-translational modification N6-acetyllysine; alternate. N6-lactoyllysine; alternate is present on residues Lys-19, Lys-24, and Lys-28. An N6-glutaryllysine; alternate mark is found at Lys-19, Lys-24, and Lys-28. An N6-butyryllysine; alternate mark is found at Lys-19 and Lys-24. Lys-19 bears the N6-methylated lysine; alternate mark. Lys-24 carries the post-translational modification N6-acetyllysine. N6-acetyllysine; alternate occurs at positions 28 and 37. Residues Lys-28 and Lys-37 each carry the N6-methylated lysine; alternate modification. Position 42 is a phosphotyrosine (Tyr-42). Lys-57 carries the post-translational modification N6-(2-hydroxyisobutyryl)lysine; alternate. At Lys-57 the chain carries N6-lactoyllysine; alternate. At Lys-57 the chain carries N6-glutaryllysine; alternate. Lys-57 is modified (N6-succinyllysine; alternate). Residue Ser-58 is modified to Phosphoserine. An N6-(2-hydroxyisobutyryl)lysine; alternate mark is found at Lys-65 and Lys-80. Lys-65 and Lys-80 each carry N6-methylated lysine. Lys-80 carries the post-translational modification N6-lactoyllysine; alternate. Position 80 is an N6-glutaryllysine; alternate (Lys-80). Residue Lys-80 is modified to N6-succinyllysine; alternate. Thr-81 is modified (phosphothreonine). N6-acetyllysine; alternate is present on residues Lys-116 and Lys-123. Residues Lys-116 and Lys-123 each carry the N6-glutaryllysine; alternate modification. Lys-123 is modified (N6-(2-hydroxyisobutyryl)lysine; alternate). Lys-123 carries the N6-methylated lysine; alternate modification. At Lys-123 the chain carries N6-succinyllysine; alternate.

The protein belongs to the histone H3 family. As to quaternary structure, the nucleosome is a histone octamer containing two molecules each of H2A, H2B, H3 and H4 assembled in one H3-H4 heterotetramer and two H2A-H2B heterodimers. The octamer wraps approximately 147 bp of DNA. In terms of processing, acetylation is generally linked to gene activation. Acetylation on Lys-19 (H3K18ac) and Lys-24 (H3K24ac) favors methylation at Arg-18 (H3R17me). Acetylation at Lys-123 (H3K122ac) by EP300/p300 plays a central role in chromatin structure: localizes at the surface of the histone octamer and stimulates transcription, possibly by promoting nucleosome instability. Asymmetric dimethylation at Arg-18 (H3R17me2a) is linked to gene activation. Asymmetric dimethylation at Arg-3 (H3R2me2a) by PRMT6 is linked to gene repression and is mutually exclusive with H3 Lys-5 methylation (H3K4me2 and H3K4me3). H3R2me2a is present at the 3' of genes regardless of their transcription state and is enriched on inactive promoters, while it is absent on active promoters. Post-translationally, methylation at Lys-5 (H3K4me) and Lys-80 (H3K79me) are linked to gene activation. Methylation at Lys-5 (H3K4me) facilitates subsequent acetylation of H3 and H4. Methylation at Lys-80 (H3K79me) is associated with DNA double-strand break (DSB) responses and is a specific target for TP53BP1. Methylation at Lys-10 (H3K9me) and Lys-28 (H3K27me) are linked to gene repression. Methylation at Lys-10 (H3K9me) is a specific target for HP1 proteins (CBX1, CBX3 and CBX5) and prevents subsequent phosphorylation at Ser-11 (H3S10ph) and acetylation of H3 and H4. Methylation at Lys-5 (H3K4me) and Lys-80 (H3K79me) require preliminary monoubiquitination of H2B at 'Lys-120'. In terms of processing, phosphorylated at Thr-4 (H3T3ph) by HASPIN during prophase and dephosphorylated during anaphase. Phosphorylation at Ser-11 (H3S10ph) by aurkb is crucial for chromosome condensation and cell-cycle progression during mitosis and meiosis. In addition phosphorylation at Ser-11 (H3S10ph) by rps6ka4 and rps6ka5 is important during interphase because it enables the transcription of genes following external stimulation, like mitogens, stress, growth factors or UV irradiation and result in the activation of genes, such as c-fos and c-jun. Phosphorylation at Ser-11 (H3S10ph), which is linked to gene activation, prevents methylation at Lys-10 (H3K9me) but facilitates acetylation of H3 and H4. Phosphorylation at Ser-11 (H3S10ph) by aurkb mediates the dissociation of HP1 proteins (cbx1, cbx3 and cbx5) from heterochromatin. Phosphorylation at Ser-11 (H3S10ph) is also an essential regulatory mechanism for neoplastic cell transformation. Phosphorylation at Thr-7 (H3T6ph) by prkcb is a specific tag for epigenetic transcriptional activation that prevents demethylation of Lys-5 (H3K4me) by lsd1/kdm1a. At centromeres, specifically phosphorylated at Thr-12 (H3T11ph) from prophase to early anaphase, by DAPK3 and PKN1. Phosphorylation at Thr-12 (H3T11ph) by PKN1 or isoform M2 of PKM (PKM2) is a specific tag for epigenetic transcriptional activation that promotes demethylation of Lys-10 (H3K9me) by kdm4c/jmjd2c. Phosphorylation at Tyr-42 (H3Y41ph) by jak2 promotes exclusion of cbx5 (HP1 alpha) from chromatin. Lysine deamination at Lys-5 (H3K4all) to form allysine only takes place on H3K4me3 and results in gene repression. Post-translationally, butyrylation of histones marks active promoters and competes with histone acetylation. It is present during late spermatogenesis. In terms of processing, succinylation at Lys-80 (H3K79succ) by KAT2A takes place with a maximum frequency around the transcription start sites of genes. It gives a specific tag for epigenetic transcription activation. Desuccinylation at Lys-123 (H3K122succ) by SIRT7 in response to DNA damage promotes chromatin condensation and double-strand breaks (DSBs) repair. Serine ADP-ribosylation constitutes the primary form of ADP-ribosylation of proteins in response to DNA damage. Serine ADP-ribosylation at Ser-11 (H3S10ADPr) is mutually exclusive with phosphorylation at Ser-11 (H3S10ph) and impairs acetylation at Lys-10 (H3K9ac).

The protein resides in the nucleus. It is found in the chromosome. Core component of nucleosome. Nucleosomes wrap and compact DNA into chromatin, limiting DNA accessibility to the cellular machineries which require DNA as a template. Histones thereby play a central role in transcription regulation, DNA repair, DNA replication and chromosomal stability. DNA accessibility is regulated via a complex set of post-translational modifications of histones, also called histone code, and nucleosome remodeling. The polypeptide is Histone H3.3C (h3-5) (Xenopus laevis (African clawed frog)).